We begin with the raw amino-acid sequence, 24 residues long: Brevinin-1SPa (24 aa).

Residues Cys-18 and Cys-24 are joined by a disulfide bond.

As to expression, expressed by the skin glands.

It is found in the secreted. Its function is as follows. Antimicrobial peptide with activity against Gram-negative and Gram-positive bacteria (MIC=13 uM against E.coli, MIC=3 uM against S.aureus) and fungi (MIC=6 uM against C.albicans). Shows hemolytic activity on human erythrocytes (HC(50)=7 uM). This is Brevinin-1SPa from Lithobates septentrionalis (Mink frog).